Here is a 486-residue protein sequence, read N- to C-terminus: Corytuberine synthase (486 aa).

A helical membrane pass occupies residues 6 to 21; sequence ALFSLIPVILVFILLL. Position 428 (C428) interacts with heme.

Belongs to the cytochrome P450 family. Requires heme as cofactor.

It localises to the endoplasmic reticulum membrane. It catalyses the reaction (S)-reticuline + reduced [NADPH--hemoprotein reductase] + O2 = (S)-corytuberine + oxidized [NADPH--hemoprotein reductase] + 2 H2O + 2 H(+). With respect to regulation, inhibited by ketoconazole. Cytochrome P450 that catalyzes an intramolecular C-C phenol coupling of (S)-reticuline in magnoflorine biosynthesis. Catalyzes the formation of (S)-corytuberine from (S)-reticuline, and also, with a lover efficiency, the 4'-O-demethylation of codamine to produce orientaline, and subsequent C-C-phenol coupling of orientaline. Can also use (R,S)-norreticuline, (R,S)-orientaline, (S)-N-methylcoclaurine and (S)-coclaurine as substrates, but not (R,S)-6-O-methyllaudanosoline, (R,S)-6-O-methylnorlaudanosoline, (R,S)-laudanine, (R,S)-norlaudanine, (R,S)-4'-O-methyllaudanosoline, (R,S)-pseudocodamine, (R,S)-norpseudocodamine, (R,S)-laudanosine, (R,S)-norlaudanosine, (R,S)-laudanosoline or (R,S)-norlaudanosoline. This Coptis japonica (Japanese goldthread) protein is Corytuberine synthase.